The sequence spans 306 residues: Pantothenate kinase (306 aa).

Gly-91 to Ser-98 contributes to the ATP binding site.

This sequence belongs to the prokaryotic pantothenate kinase family.

Its subcellular location is the cytoplasm. It catalyses the reaction (R)-pantothenate + ATP = (R)-4'-phosphopantothenate + ADP + H(+). Its pathway is cofactor biosynthesis; coenzyme A biosynthesis; CoA from (R)-pantothenate: step 1/5. In Streptococcus suis (strain 05ZYH33), this protein is Pantothenate kinase.